The primary structure comprises 185 residues: MTKEIVTKAQERFEQSHQSLSREFAGIRAGRANASLLDRIQVEYYGAPTPLNQLASITVPEARVLLISPFDKSSIKDIERAINESDLGINPANDGSVIRLVIPALTEETRRDLAKEVKKVGENAKIAIRNIRRDAMDEAKKQEKNKEITEDDLKSLEKDIQKATDDAVKHIDEMTANKEKELLEV.

It belongs to the RRF family.

Its subcellular location is the cytoplasm. Responsible for the release of ribosomes from messenger RNA at the termination of protein biosynthesis. May increase the efficiency of translation by recycling ribosomes from one round of translation to another. The polypeptide is Ribosome-recycling factor (Streptococcus agalactiae serotype V (strain ATCC BAA-611 / 2603 V/R)).